A 519-amino-acid polypeptide reads, in one-letter code: 2-isopropylmalate synthase (519 aa).

Positions 12–274 constitute a Pyruvate carboxyltransferase domain; sequence VVIFDTTLRD…WCNVESTMLT (263 aa). Residues Asp21, His209, His211, and Asn245 each coordinate Mn(2+). A regulatory domain region spans residues 398 to 519; the sequence is KLSSLTVIAG…QRDVPAAAAS (122 aa).

The protein belongs to the alpha-IPM synthase/homocitrate synthase family. LeuA type 1 subfamily. In terms of assembly, homodimer. It depends on Mn(2+) as a cofactor.

Its subcellular location is the cytoplasm. The catalysed reaction is 3-methyl-2-oxobutanoate + acetyl-CoA + H2O = (2S)-2-isopropylmalate + CoA + H(+). The protein operates within amino-acid biosynthesis; L-leucine biosynthesis; L-leucine from 3-methyl-2-oxobutanoate: step 1/4. Functionally, catalyzes the condensation of the acetyl group of acetyl-CoA with 3-methyl-2-oxobutanoate (2-ketoisovalerate) to form 3-carboxy-3-hydroxy-4-methylpentanoate (2-isopropylmalate). This Nitrobacter winogradskyi (strain ATCC 25391 / DSM 10237 / CIP 104748 / NCIMB 11846 / Nb-255) protein is 2-isopropylmalate synthase.